We begin with the raw amino-acid sequence, 219 residues long: Ribosomal RNA small subunit methyltransferase G (219 aa).

3 residues coordinate S-adenosyl-L-methionine: G81, L86, and R150.

It belongs to the methyltransferase superfamily. RNA methyltransferase RsmG family.

It is found in the cytoplasm. It carries out the reaction guanosine(527) in 16S rRNA + S-adenosyl-L-methionine = N(7)-methylguanosine(527) in 16S rRNA + S-adenosyl-L-homocysteine. Specifically methylates the N7 position of guanine in position 527 of 16S rRNA. The chain is Ribosomal RNA small subunit methyltransferase G from Magnetococcus marinus (strain ATCC BAA-1437 / JCM 17883 / MC-1).